A 255-amino-acid chain; its full sequence is tRNA (guanine-N(1)-)-methyltransferase (255 aa).

S-adenosyl-L-methionine is bound by residues G113 and 133–138; that span reads IGDYVL.

This sequence belongs to the RNA methyltransferase TrmD family. Homodimer.

Its subcellular location is the cytoplasm. The enzyme catalyses guanosine(37) in tRNA + S-adenosyl-L-methionine = N(1)-methylguanosine(37) in tRNA + S-adenosyl-L-homocysteine + H(+). In terms of biological role, specifically methylates guanosine-37 in various tRNAs. The chain is tRNA (guanine-N(1)-)-methyltransferase from Salmonella paratyphi A (strain ATCC 9150 / SARB42).